We begin with the raw amino-acid sequence, 459 residues long: Diaminopimelate decarboxylase (459 aa).

K89 bears the N6-(pyridoxal phosphate)lysine mark. Pyridoxal 5'-phosphate is bound by residues G271 and 313 to 316 (EPGR). Substrate is bound by residues R316, R357, and Y361. C388 acts as the Proton donor in catalysis. Substrate-binding residues include E389 and Y418. Pyridoxal 5'-phosphate is bound at residue Y418.

It belongs to the Orn/Lys/Arg decarboxylase class-II family. LysA subfamily. Homodimer. Pyridoxal 5'-phosphate serves as cofactor.

The catalysed reaction is meso-2,6-diaminopimelate + H(+) = L-lysine + CO2. It functions in the pathway amino-acid biosynthesis; L-lysine biosynthesis via DAP pathway; L-lysine from DL-2,6-diaminopimelate: step 1/1. In terms of biological role, specifically catalyzes the decarboxylation of meso-diaminopimelate (meso-DAP) to L-lysine. The polypeptide is Diaminopimelate decarboxylase (Corynebacterium efficiens (strain DSM 44549 / YS-314 / AJ 12310 / JCM 11189 / NBRC 100395)).